The primary structure comprises 285 residues: Probable endonuclease 4 (285 aa).

9 residues coordinate Zn(2+): histidine 69, histidine 109, glutamate 145, aspartate 179, histidine 182, histidine 216, aspartate 229, histidine 231, and glutamate 261.

It belongs to the AP endonuclease 2 family. Requires Zn(2+) as cofactor.

It catalyses the reaction Endonucleolytic cleavage to 5'-phosphooligonucleotide end-products.. Functionally, endonuclease IV plays a role in DNA repair. It cleaves phosphodiester bonds at apurinic or apyrimidinic (AP) sites, generating a 3'-hydroxyl group and a 5'-terminal sugar phosphate. The chain is Probable endonuclease 4 from Salmonella paratyphi C (strain RKS4594).